A 338-amino-acid chain; its full sequence is tRNA N6-adenosine threonylcarbamoyltransferase (338 aa).

The Fe cation site is built by histidine 111 and histidine 115. Substrate is bound by residues 134–138 (LVSGG), aspartate 167, glycine 180, and asparagine 272. Aspartate 300 is a binding site for Fe cation.

It belongs to the KAE1 / TsaD family. It depends on Fe(2+) as a cofactor.

Its subcellular location is the cytoplasm. The enzyme catalyses L-threonylcarbamoyladenylate + adenosine(37) in tRNA = N(6)-L-threonylcarbamoyladenosine(37) in tRNA + AMP + H(+). Required for the formation of a threonylcarbamoyl group on adenosine at position 37 (t(6)A37) in tRNAs that read codons beginning with adenine. Is involved in the transfer of the threonylcarbamoyl moiety of threonylcarbamoyl-AMP (TC-AMP) to the N6 group of A37, together with TsaE and TsaB. TsaD likely plays a direct catalytic role in this reaction. In Shewanella baltica (strain OS155 / ATCC BAA-1091), this protein is tRNA N6-adenosine threonylcarbamoyltransferase.